The primary structure comprises 522 residues: Mediator of RNA polymerase II transcription subunit 1.2 (522 aa).

Residues 13-40 are a coiled coil; that stretch reads LLEQRKNQELNIEHIDEEMRLEQVRQAA.

The protein belongs to the Mediator complex subunit 1 family. In terms of assembly, component of the Mediator complex.

Its subcellular location is the nucleus. Functionally, component of the Mediator complex, a coactivator involved in the regulated transcription of nearly all RNA polymerase II-dependent genes. Mediator functions as a bridge to convey information from gene-specific regulatory proteins to the basal RNA polymerase II transcription machinery. Mediator is recruited to promoters by direct interactions with regulatory proteins and serves as a scaffold for the assembly of a functional preinitiation complex with RNA polymerase II and the general transcription factors. In Caenorhabditis elegans, this protein is Mediator of RNA polymerase II transcription subunit 1.2 (mdt-1.2).